Here is a 614-residue protein sequence, read N- to C-terminus: DBH-like monooxygenase protein 1 (614 aa).

Residues 1 to 22 (MRPLRPWALLLGALLGAAAAAA) form the signal peptide. Residues 23 to 592 (RRYPHVAVLD…SSSCLPCSLS (570 aa)) are Lumenal-facing. The DOMON domain maps to 35–148 (AAYRLLWGRR…STVRVIWAYH (114 aa)). Residue asparagine 114 is glycosylated (N-linked (GlcNAc...) asparagine). Residue tyrosine 203 is part of the active site. Intrachain disulfides connect cysteine 205–cysteine 257 and cysteine 242–cysteine 269. Residues histidine 235 and histidine 236 each coordinate Cu cation. Asparagine 247 is a glycosylation site (N-linked (GlcNAc...) asparagine). Positions 307, 389, 391, and 464 each coordinate Cu cation. 3 disulfide bridges follow: cysteine 364–cysteine 480, cysteine 368–cysteine 550, and cysteine 443–cysteine 465. Histidine 389 is a catalytic residue. N-linked (GlcNAc...) asparagine glycosylation is found at asparagine 476 and asparagine 517. The chain crosses the membrane as a helical span at residues 593 to 613 (LTLLFVVYVASSTIGNFGPVV).

Belongs to the copper type II ascorbate-dependent monooxygenase family. Cu(2+) serves as cofactor.

It localises to the endoplasmic reticulum membrane. This chain is DBH-like monooxygenase protein 1 (MOXD1), found in Gallus gallus (Chicken).